Consider the following 211-residue polypeptide: ATP phosphoribosyltransferase (211 aa).

The protein belongs to the ATP phosphoribosyltransferase family. Short subfamily. Heteromultimer composed of HisG and HisZ subunits.

It is found in the cytoplasm. It carries out the reaction 1-(5-phospho-beta-D-ribosyl)-ATP + diphosphate = 5-phospho-alpha-D-ribose 1-diphosphate + ATP. It participates in amino-acid biosynthesis; L-histidine biosynthesis; L-histidine from 5-phospho-alpha-D-ribose 1-diphosphate: step 1/9. Functionally, catalyzes the condensation of ATP and 5-phosphoribose 1-diphosphate to form N'-(5'-phosphoribosyl)-ATP (PR-ATP). Has a crucial role in the pathway because the rate of histidine biosynthesis seems to be controlled primarily by regulation of HisG enzymatic activity. The chain is ATP phosphoribosyltransferase from Pseudomonas putida (strain ATCC 700007 / DSM 6899 / JCM 31910 / BCRC 17059 / LMG 24140 / F1).